The following is a 44-amino-acid chain: Thrombin-like enzyme F202 (44 aa).

Positions 1–44 (VVGGDECNINEHRFLVALYANSSLLCGGTLINQEWVLIAAHCDR) constitute a Peptidase S1 domain. Cysteine 26 and cysteine 42 are disulfide-bonded. Histidine 41 serves as the catalytic Charge relay system.

It belongs to the peptidase S1 family. Snake venom subfamily. In terms of assembly, monomer. In terms of processing, contains 6 disulfide bonds. As to expression, expressed by the venom gland.

It is found in the secreted. Its activity is regulated as follows. Enzyme activity is markedly inhibited by TLCK and PMSF, and moderately by SBTi. Platelet aggregating activity is strongly inhibited by TLCK. Its function is as follows. Thrombin-like snake venom serine protease that coagulates fibrinogen by inducing a fast degradation of the alpha chain (FGA) from human citrated plasma, and a slow degradation of beta chain (FGB). Potently induces platelet aggregation in both platelet rich plasma and washed platelet preparations in a concentration-dependent fashion. Shows amidolytic activities. The protein is Thrombin-like enzyme F202 of Crotalus durissus cascavella (Northeastern Brazilian rattlesnake).